The chain runs to 228 residues: DOPA 4,5-dioxygenase (228 aa).

As to quaternary structure, homodimer. As to expression, expressed at high level in coloured cap tissue and at least 10 times lower level in the stipe.

The protein localises to the cytoplasm. It functions in the pathway pigment biosynthesis; betalain biosynthesis. Extradiol dioxygenase that opens up the cyclic ring of DOPA between carbons 4 and 5 thus producing an unstable seco-DOPA that rearranges non-enzymatically to betalamic acid. Can also catalyze the formation of muscaflavin (a pigment found in the hygrocybe mushrooms family and of some amanita species only) by a 2,3-extradiol cleavage of DOPA. The polypeptide is DOPA 4,5-dioxygenase (DODA) (Amanita muscaria (Fly agaric)).